Reading from the N-terminus, the 996-residue chain is Filament-like plant protein 5 (996 aa).

The interval 1–20 is disordered; it reads MEGRGWPWKRKSSDKATTEK. 4 coiled-coil regions span residues 59 to 94, 133 to 248, 280 to 301, and 359 to 387; these read THMS…TKES, TAED…KYDL, VKKI…RKKL, and LTRR…LQVS. 2 disordered regions span residues 409-482 and 496-534; these read NNDK…SSSR and VGSD…DEDT. The span at 417 to 428 shows a compositional bias: low complexity; the sequence is SNSRNLSESLSS. The span at 471 to 482 shows a compositional bias: polar residues; the sequence is VNGSSKPRSSSR. Positions 503-527 are enriched in low complexity; the sequence is ANSASKSSNSVCSRRSVEKQSSSKS. Coiled coils occupy residues 601–622, 737–841, and 876–906; these read QNSE…VANI, DSSC…FTTE, and NQEK…QSLQ. Positions 962–996 are disordered; the sequence is IMKSSSVSSSSKEDNEKHTRGLGRFFSSKSKNSAR.

It belongs to the FPP family. Interacts with WPP/MAF proteins.

This Arabidopsis thaliana (Mouse-ear cress) protein is Filament-like plant protein 5 (FPP5).